Here is a 141-residue protein sequence, read N- to C-terminus: Hemoglobin subunit alpha (141 aa).

The interval valine 1–glycine 22 is disordered. A Globin domain is found at valine 1–arginine 141. Histidine 58 serves as a coordination point for O2. Histidine 87 provides a ligand contact to heme b.

Belongs to the globin family. Heterotetramer of two alpha chains and two beta chains. As to expression, red blood cells.

Its function is as follows. Involved in oxygen transport from the lung to the various peripheral tissues. The sequence is that of Hemoglobin subunit alpha (HBA) from Vipera aspis (Aspic viper).